Reading from the N-terminus, the 394-residue chain is Elongation factor Tu (394 aa).

The region spanning 10–205 is the tr-type G domain; it reads KPHMNVGTIG…SMDNYFDLPE (196 aa). A G1 region spans residues 19–26; the sequence is GHVDHGKT. Residue 19-26 participates in GTP binding; it reads GHVDHGKT. Residue threonine 26 participates in Mg(2+) binding. A G2 region spans residues 61–65; it reads GITIN. The interval 82–85 is G3; that stretch reads DCPG. Residues 82-86 and 137-140 contribute to the GTP site; these read DCPGH and NKLD. Positions 137 to 140 are G4; sequence NKLD. Residues 173-175 are G5; that stretch reads SAF.

Belongs to the TRAFAC class translation factor GTPase superfamily. Classic translation factor GTPase family. EF-Tu/EF-1A subfamily. In terms of assembly, monomer.

The protein resides in the cytoplasm. It carries out the reaction GTP + H2O = GDP + phosphate + H(+). In terms of biological role, GTP hydrolase that promotes the GTP-dependent binding of aminoacyl-tRNA to the A-site of ribosomes during protein biosynthesis. This chain is Elongation factor Tu, found in Borreliella burgdorferi (strain ATCC 35210 / DSM 4680 / CIP 102532 / B31) (Borrelia burgdorferi).